The primary structure comprises 122 residues: MIQNESYLVAADNSGAKVLRVIRVLGGSHKQFGTIGDIVVCSVREAVPNTDIKKGDVVKAVVVRTKKEIRRPDGSYIRFDDNAAVVLDKFNQPKGTRVFGPVARELREKGFMKIVSLAPEVW.

Belongs to the universal ribosomal protein uL14 family. In terms of assembly, part of the 50S ribosomal subunit. Forms a cluster with proteins L3 and L19. In the 70S ribosome, L14 and L19 interact and together make contacts with the 16S rRNA in bridges B5 and B8.

Binds to 23S rRNA. Forms part of two intersubunit bridges in the 70S ribosome. This is Large ribosomal subunit protein uL14 from Fervidobacterium nodosum (strain ATCC 35602 / DSM 5306 / Rt17-B1).